Here is a 276-residue protein sequence, read N- to C-terminus: Putative metal-binding protein CT_415 (276 aa).

Residues 1-18 (MRLLFLLLFSLGITCSYG) form the signal peptide. The a divalent metal cation site is built by His-59, His-121, His-185, and Asp-256.

The protein belongs to the bacterial solute-binding protein 9 family.

It localises to the periplasm. Part of an ATP-binding cassette (ABC) transport system involved in metal import. Binds a metal with high affinity and specificity and delivers it to the membrane permease for translocation into the cytoplasm. The polypeptide is Putative metal-binding protein CT_415 (Chlamydia trachomatis serovar D (strain ATCC VR-885 / DSM 19411 / UW-3/Cx)).